Reading from the N-terminus, the 445-residue chain is Endoplasmic reticulum membrane adapter protein XK (445 aa).

At 1-2 (MK) the chain is on the cytoplasmic side. Residues 3 to 23 (FPASVLASVFLFVAETMAALY) traverse the membrane as a helical segment. Residues 24 to 37 (LSSTYRSAGDRMWQ) lie on the Extracellular side of the membrane. A helical membrane pass occupies residues 38-58 (ALTLFFSLMPCTLVQLTLLFV). At 59–68 (HRDLSRDRPL) the chain is on the cytoplasmic side. The chain crosses the membrane as a helical span at residues 69 to 89 (VLLMHLLQLGPLYRCCEVFCI). The Extracellular portion of the chain corresponds to 90-140 (YCQSDQNEEPYVSITKKRQMPKDGLSEEVEKEVGQSEGKLFTHRSAFSRAS). Ser115 bears the Phosphoserine mark. The chain crosses the membrane as a helical span at residues 141–161 (VIQAFLGSAPQLTLQLYITVL). The Cytoplasmic portion of the chain corresponds to 162-170 (EQNITTGRF). A helical transmembrane segment spans residues 171–191 (IMVLSLLSIVYGALRCNILAI). The Extracellular portion of the chain corresponds to 192–207 (KIKYDEYEVKVKPLAY). Residues 208-228 (VCIFLWRSFEIATRVIVLVLF) traverse the membrane as a helical segment. At 229 to 234 (TSVLKI) the chain is on the cytoplasmic side. The helical transmembrane segment at 235 to 255 (WVVVVILVNFFSFFLYPWILF) threads the bilayer. At 256–276 (WNSGSPFPENIEKALTRVGTT) the chain is on the extracellular side. The chain crosses the membrane as a helical span at residues 277 to 297 (IVLGFLTLLYAGINMFCWSAV). Topologically, residues 298-316 (QLKIDNPELISKSQNWYRL) are cytoplasmic. A helical membrane pass occupies residues 317-337 (LIYYMMRFVENSVLLLLWFFF). Topologically, residues 338 to 348 (KTDIYMYVCAP) are extracellular. A helical transmembrane segment spans residues 349-369 (LLILQLLIGYCTSILFMLVFY). Residues 370 to 445 (QFFHPCKKLF…IWTAVDLCST (76 aa)) are Cytoplasmic-facing.

This sequence belongs to the XK family. In terms of assembly, heterodimer with Kell; disulfide-linked. Interacts with VPS13A.

The protein localises to the endoplasmic reticulum membrane. Recruits the lipid transfer protein VPS13A from lipid droplets to the endoplasmic reticulum (ER) membrane. In Rattus norvegicus (Rat), this protein is Endoplasmic reticulum membrane adapter protein XK.